A 243-amino-acid chain; its full sequence is Large ribosomal subunit protein uL2 (243 aa).

The tract at residues valine 198–glutamate 243 is disordered. Residues proline 221–serine 231 are compositionally biased toward basic and acidic residues.

The protein belongs to the universal ribosomal protein uL2 family. In terms of assembly, part of the 50S ribosomal subunit. Forms a bridge to the 30S subunit in the 70S ribosome.

Its function is as follows. One of the primary rRNA binding proteins. Required for association of the 30S and 50S subunits to form the 70S ribosome, for tRNA binding and peptide bond formation. It has been suggested to have peptidyltransferase activity; this is somewhat controversial. Makes several contacts with the 16S rRNA in the 70S ribosome. The polypeptide is Large ribosomal subunit protein uL2 (Natronomonas pharaonis (strain ATCC 35678 / DSM 2160 / CIP 103997 / JCM 8858 / NBRC 14720 / NCIMB 2260 / Gabara) (Halobacterium pharaonis)).